Here is a 168-residue protein sequence, read N- to C-terminus: Large ribosomal subunit protein uL11 (168 aa).

Belongs to the universal ribosomal protein uL11 family. As to quaternary structure, part of the ribosomal stalk of the 50S ribosomal subunit. Interacts with L10 and the large rRNA to form the base of the stalk. L10 forms an elongated spine to which L12 dimers bind in a sequential fashion forming a multimeric L10(L12)X complex.

Functionally, forms part of the ribosomal stalk which helps the ribosome interact with GTP-bound translation factors. In Metallosphaera sedula (strain ATCC 51363 / DSM 5348 / JCM 9185 / NBRC 15509 / TH2), this protein is Large ribosomal subunit protein uL11.